The primary structure comprises 30 residues: Chassatide C9 (30 aa).

The cyclopeptide (Gly-Asn) cross-link spans 1–30; the sequence is GIPCGESCVFIPCVTTVIGCSCKDKVCYNN. Disulfide bonds link C4/C20, C8/C22, and C13/C27.

This is a cyclic peptide.

Probably participates in a plant defense mechanism. The sequence is that of Chassatide C9 from Chassalia chartacea (Chassalia curviflora).